The chain runs to 137 residues: Probable DNA-directed RNA polymerases I, II, and III subunit RPABC2 (137 aa).

2 stretches are compositionally biased toward acidic residues: residues 1-27 (MADE…VIEE) and 34-43 (NEDEDDDNVD). The segment at 1-43 (MADEDDYQDMDNDDFVDDNEMEDVIEEDPQRPDNEDEDDDNVD) is disordered.

Belongs to the archaeal Rpo6/eukaryotic RPB6 RNA polymerase subunit family. As to quaternary structure, component of the RNA polymerase I (Pol I), RNA polymerase II (Pol II) and RNA polymerase III (Pol III) complexes consisting of at least 13, 12 and 17 subunits, respectively.

It localises to the nucleus. In terms of biological role, DNA-dependent RNA polymerases catalyze the transcription of DNA into RNA using the four ribonucleoside triphosphates as substrates. Common component of RNA polymerases I, II and III which synthesize ribosomal RNA precursors, mRNA precursors and many functional non-coding RNAs, and small RNAs, such as 5S rRNA and tRNAs, respectively. Pol II is the central component of the basal RNA polymerase II transcription machinery. Pols are composed of mobile elements that move relative to each other. In Pol II, RPB6 is part of the clamp element and together with parts of RPB1 and RPB2 forms a pocket to which the RPB4-RPB7 subcomplex binds. This is Probable DNA-directed RNA polymerases I, II, and III subunit RPABC2 (rpb-6) from Caenorhabditis elegans.